The following is an 830-amino-acid chain: MTFDTNDDSIAKNSLAPYNQETEQQQEEGAMKINAGTEDDVQPQEIPSSIPILPLRDVVVFNYMIVPLFVGRERSIQAVESATTHGQHIFLCAQKDSQIENPTEEDLYSVGTVALILRLLKMPDGRLKALVQGISRARCLTIHNEDGYLTATVELLQEPQPTVKPTEQEALLRYAREQCEKILALRGIPTGEIMGVLSNVNEPGRLADLIAANLRLKTEEAQEILQCLEPIDRLHLVITHLTHEAEVATMQVKIQTSAREGMDKAQKDYFLREQLKAIRKELGDAIDADEEIEEVSSALNKAGLPAEVRKEVDKQLRRLSTMHADSAEAGVIRTYLDWIAELPWKKTSKDQLDIHKAKTILNEDHYGLVKIKDRILEYLSVRKLNPKSKGPILCFAGPPGVGKTSLGRSIAKSLGRKFQRISLGGMHDEAEIRGHRRTYIGAMPGRLIQAMKQAGTKNPVILLDEIDKLGNDFRGDPSSALLEALDPEQNHNFSDHYLNVPFDLSKVLFLCTANHLEHIPAALKDRLEIISLPGYTQQEKLAIARKYILPKQLKENGLKENELIISDTCLEKIIREYTREAGLRNMEREIGSLCRKVARKKAEGKKPPFRITTNQIEKFLGIPRFIDDDTEKTLPPGVALGLAWTPAGGEILYIEVSTVKGKGNLLLTGQLGDVMKESAQAALSYARSKASSLNISPDFAKSMDIHIHIPAGATPKDGPSAGVTLTTALISALTGKSVRGDLCMTGEITLRGRVLPVGGIKEKVLAGVARGLGHVIIPTKNTKDLEEIPQELKKKIKIHTVSHIDEVLPLAFSETIPVVTKKKQTKQPTS.

The segment at 1–28 (MTFDTNDDSIAKNSLAPYNQETEQQQEE) is disordered. Residues 50-245 (IPILPLRDVV…LVITHLTHEA (196 aa)) enclose the Lon N-terminal domain. 397–404 (GPPGVGKT) provides a ligand contact to ATP. In terms of domain architecture, Lon proteolytic spans 633–814 (TLPPGVALGL…DEVLPLAFSE (182 aa)). Active-site residues include Ser-720 and Lys-763.

This sequence belongs to the peptidase S16 family. As to quaternary structure, homohexamer. Organized in a ring with a central cavity.

It is found in the cytoplasm. The enzyme catalyses Hydrolysis of proteins in presence of ATP.. Its function is as follows. ATP-dependent serine protease that mediates the selective degradation of mutant and abnormal proteins as well as certain short-lived regulatory proteins. Required for cellular homeostasis and for survival from DNA damage and developmental changes induced by stress. Degrades polypeptides processively to yield small peptide fragments that are 5 to 10 amino acids long. Binds to DNA in a double-stranded, site-specific manner. The protein is Lon protease of Lawsonia intracellularis (strain PHE/MN1-00).